The primary structure comprises 1279 residues: ATP-dependent helicase/nuclease subunit A (1279 aa).

A UvrD-like helicase ATP-binding domain is found at 4-499 (TKWTDEQRQA…VKLFKNFRSR (496 aa)). 25 to 32 (AGAGAGKT) is a binding site for ATP. Residues 526-853 (EEALKVGASY…RIMSIHKSKG (328 aa)) form the UvrD-like helicase C-terminal domain.

The protein belongs to the helicase family. AddA subfamily. As to quaternary structure, heterodimer of AddA and AddB/RexB. It depends on Mg(2+) as a cofactor.

It catalyses the reaction Couples ATP hydrolysis with the unwinding of duplex DNA by translocating in the 3'-5' direction.. The catalysed reaction is ATP + H2O = ADP + phosphate + H(+). In terms of biological role, the heterodimer acts as both an ATP-dependent DNA helicase and an ATP-dependent, dual-direction single-stranded exonuclease. Recognizes the chi site generating a DNA molecule suitable for the initiation of homologous recombination. The AddA nuclease domain is required for chi fragment generation; this subunit has the helicase and 3' -&gt; 5' nuclease activities. This is ATP-dependent helicase/nuclease subunit A from Clostridium botulinum (strain Okra / Type B1).